Consider the following 481-residue polypeptide: Surface lipoprotein assembly modifier 1 (481 aa).

An N-terminal signal peptide occupies residues 1 to 23 (MSIQTKFILFLSSSLFLTPYSVA). Residues 25 to 192 (EKSPQPHDGR…QYLSALNQRD (168 aa)) are N-terminal domain. Residues 193-481 (QWKIQGGFSF…RIYVEISKTF (289 aa)) form a C-terminal probable beta barrel region. A run of 14 beta stranded transmembrane segments spans residues 194–204 (WKIQGGFSFLN), 233–243 (SYFGNAEKKWS), 248–258 (HFTKLSLEGSG), 271–281 (NARAGVGLGYQ), 285–295 (FELSLMPFTEK), 315–325 (SGARLDLSNWL), 329–338 (WQISTALEYG), 353–363 (YLASATLLYLA), 368–377 (YWFGGADYNR), 390–400 (KNVRLGWGQEW), 405–414 (STRLILNYAR), 432–441 (YASVLTIWHR), 448–458 (ITPKLSWSYQK), and 471–481 (NRIYVEISKTF).

It belongs to the Slam family.

The protein resides in the cell outer membrane. Required for correct export to the cell surface of some cell outer membrane lipoproteins. The polypeptide is Surface lipoprotein assembly modifier 1 (Haemophilus influenzae (strain ATCC 51907 / DSM 11121 / KW20 / Rd)).